The sequence spans 370 residues: MELKQTPLHSIHKEMGAKMVPFGGWDMPVQYTGIIQEHLATRANAGIFDVSHMGEIFVTGDANDVLDFLESVTCNTISTMKEGQVQYNAVVNEVGGLVDDITVYKFNDTKYMICSNASNFEAVTQHLLKYVKGNVSIANDSKNWHQIALQGPKADAIFTKYLGKDLSSILYYHFEEMNWRGETIIVSRTGYTGEDGFEIYTSNALGVTLWKELLEIGKDFGLVPVGLGARDTLRLEAKYPLYGHELNAEWTPVESGINFIVKEKSKPYLGYDRIIADKKNGPKSKVVGVRLLEPGVLRENFPIFAADGKEIGKTTSGTHSPSRKESLGLAILQTEFAKNQTEVFVEIRGQKKLAKVETGAFVQGSVRNNR.

Belongs to the GcvT family. In terms of assembly, the glycine cleavage system is composed of four proteins: P, T, L and H.

The enzyme catalyses N(6)-[(R)-S(8)-aminomethyldihydrolipoyl]-L-lysyl-[protein] + (6S)-5,6,7,8-tetrahydrofolate = N(6)-[(R)-dihydrolipoyl]-L-lysyl-[protein] + (6R)-5,10-methylene-5,6,7,8-tetrahydrofolate + NH4(+). The glycine cleavage system catalyzes the degradation of glycine. This Leptospira biflexa serovar Patoc (strain Patoc 1 / Ames) protein is Aminomethyltransferase.